Reading from the N-terminus, the 288-residue chain is Sulfur carrier protein FdhD (288 aa).

C122 acts as the Cysteine persulfide intermediate in catalysis. Residue F268–R273 participates in Mo-bis(molybdopterin guanine dinucleotide) binding.

This sequence belongs to the FdhD family.

The protein localises to the cytoplasm. Required for formate dehydrogenase (FDH) activity. Acts as a sulfur carrier protein that transfers sulfur from IscS to the molybdenum cofactor prior to its insertion into FDH. This chain is Sulfur carrier protein FdhD, found in Anaeromyxobacter dehalogenans (strain 2CP-C).